A 689-amino-acid polypeptide reads, in one-letter code: DNA ligase (689 aa).

NAD(+) contacts are provided by residues 40-44 (DQEYD), 89-90 (SL), and Glu-122. The active-site N6-AMP-lysine intermediate is Lys-124. NAD(+) contacts are provided by Arg-145, Glu-182, Lys-300, and Lys-325. Cys-419, Cys-422, Cys-437, and Cys-442 together coordinate Zn(2+). Positions 600-689 (QADGVLTGAT…SADASADASA (90 aa)) constitute a BRCT domain.

It belongs to the NAD-dependent DNA ligase family. LigA subfamily. Mg(2+) serves as cofactor. Requires Mn(2+) as cofactor.

The catalysed reaction is NAD(+) + (deoxyribonucleotide)n-3'-hydroxyl + 5'-phospho-(deoxyribonucleotide)m = (deoxyribonucleotide)n+m + AMP + beta-nicotinamide D-nucleotide.. Functionally, DNA ligase that catalyzes the formation of phosphodiester linkages between 5'-phosphoryl and 3'-hydroxyl groups in double-stranded DNA using NAD as a coenzyme and as the energy source for the reaction. It is essential for DNA replication and repair of damaged DNA. This Gemmatimonas aurantiaca (strain DSM 14586 / JCM 11422 / NBRC 100505 / T-27) protein is DNA ligase.